A 1682-amino-acid chain; its full sequence is Merozoite surface protein 1 (1682 aa).

Residues 1–19 (MKIIFFLCSFLFFIINTQC) form the signal peptide. A disordered region spans residues 68-110 (AVSTQSAKNPPGATVPSGTASTKGAIRSPGAANPSDDSSDSDA). N-linked (GlcNAc...) asparagine glycans are attached at residues Asn-233, Asn-462, Asn-528, and Asn-599. Residues 696–729 (SETTEDGGHSTHTLSQSGETEVTEETEETVGHTT) form a disordered region. N-linked (GlcNAc...) asparagine glycosylation is found at Asn-785, Asn-881, Asn-901, Asn-947, Asn-1071, and Asn-1178. Residues 870–918 (ITGTSSTSSPGNTTVNTAQSATHSNSQNQQSNASSTNTQNGVAVSSGPA) are disordered. Low complexity predominate over residues 871 to 909 (TGTSSTSSPGNTTVNTAQSATHSNSQNQQSNASSTNTQN). Disordered regions lie at residues 1212-1241 (TPPQPDVTPSPLSVRVSGSSGSTKEETQIP) and 1433-1453 (KEFPSSPPTTPPSPAKTDEQK). Positions 1227–1241 (VSGSSGSTKEETQIP) are enriched in polar residues. Residues 1437 to 1446 (SSPPTTPPSP) are compositionally biased toward pro residues. Residue Asn-1569 is glycosylated (N-linked (GlcNAc...) asparagine). 2 consecutive EGF-like domains span residues 1573 to 1613 (HQCV…VENP) and 1614 to 1661 (NPTC…IFCS). Disulfide bonds link Cys-1575–Cys-1586, Cys-1580–Cys-1596, Cys-1598–Cys-1609, Cys-1617–Cys-1630, Cys-1624–Cys-1644, and Cys-1646–Cys-1660. Residue Ser-1661 is the site of GPI-anchor amidated serine attachment. The propeptide at 1662–1682 (SSNFLGISFLLILMLILYSFI) is removed in mature form.

Forms a complex composed of subunits p83, p30, p38, and p42 which remain non-covalently associated; the complex is formed at the merozoite surface prior to egress from host erythrocytes. Forms a complex composed of processed MSP1 subunits, MSP6 subunit p36 and MSP7; the complex is formed at the merozoite surface prior to egress from host erythrocytes. Within the complex, interacts (via subunit p38) with MSP6 subunit p36 and (via subunits p83, p30 and p38) with MSP7 (via subunit p22). Forms a complex composed of MSP1, MSP6, DBLMSP1 and DBLMSP2. Within the complex, interacts (via subunit p38) with DBLMSP1 and DBLMSP2. Forms a complex composed of MSP1, and rhoptry proteins RhopH3, RAP1 and CLAG9/RhopH3. Within the complex, interacts (via subunits p42 and p19) with RhopH3 (via C-terminus). Forms a complex composed of MSP1, MSP6, MSP7, MSP9 and MSP3; within the complex, MSP6 and MSP9 mediate the binding to the host erythrocyte. Interacts (via subunits p19 and p42) with MSP9; the interaction is direct; MSP1 subunits p19 or p42, and MSP9 form a co-ligand complex that interacts with host SLC4A1/Band 3 protein. May interact with PFD6. Interacts with host spectrin. As to quaternary structure, interacts with host glycophorin GYPA in a sialic acid-independent manner. In terms of assembly, interacts with host proinflammatory cytokine S100P; the interaction blocks S100P inflammatory and chemotactic activities. Interacts with host SLC4A1/Band 3 (via 5ABC region) on the host erythrocyte surface in a sialic acid-independent manner. Post-translationally, the p190 precursor is cleaved by SUB1 prior to merozoite egress into 4 subunits p83, p30, p38, and p42 which remain non-covalently associated. SUB1-mediated proteolytic cleavage occurs in an orderly manner; the first cleavage occurs at the p30/p38 site, followed by cleavage at the p83/p30 site, the last cleavage occurs at the p38/p42 site. The order of cleavage is essential for parasite viability. SUB1-mediated processing is essential for merozoite egress. In a second processing step during erythrocyte invasion, p42 is cleaved by SUB2 into p33 and p19; the latter remains attached to the merozoite surface via its GPI-anchor and is endocytosed during the subsequent ring stage.

The protein localises to the cell membrane. It localises to the secreted. Its subcellular location is the vacuole membrane. Functionally, during the asexual blood stage, involved in merozoite egress from host erythrocytes possibly via its interaction with the host cytoskeleton protein spectrin resulting in the destabilization of the host cytoskeleton and thus leading to erythrocyte cell membrane rupture. Involved in the binding to host erythrocytes and is required for host erythrocyte invasion. By binding to host proinflammatory cytokine S100P may interfere with host immune responses. Its function is as follows. Involved in merozoite invasion of host erythrocytes. May play a role in the biogenesis and/or function of the food vacuole during the intraerythrocytic development. The polypeptide is Merozoite surface protein 1 (Plasmodium falciparum (isolate ro-33 / Ghana)).